Consider the following 120-residue polypeptide: Glycine cleavage system H protein (120 aa).

A Lipoyl-binding domain is found at 17 to 99 (VATVGITTYA…QGAGWFFKLK (83 aa)). Position 58 is an N6-lipoyllysine (Lys58).

This sequence belongs to the GcvH family. As to quaternary structure, the glycine cleavage system is composed of four proteins: P, T, L and H. (R)-lipoate serves as cofactor.

The glycine cleavage system catalyzes the degradation of glycine. The H protein shuttles the methylamine group of glycine from the P protein to the T protein. The sequence is that of Glycine cleavage system H protein from Rhizobium etli (strain CIAT 652).